Consider the following 195-residue polypeptide: MAFVLSLLMALVLVSYGPGRSLGCYLSEDHMLGARENLRLLARMNRLSPHPCLQDRKDFGLPQEMVEGNQLQKDQAISVLHEMLQQCFNLFYTEHSSAAWNTTLLEQLCTGLQQQLEDLDACLGPVMGEKDSDMGRMGPILTVKKYFQGIHVYLKEKEYSDCAWEIIRVEMMRALSSSTTLQKRLRKMGGDLNSL.

Residues methionine 1 to glycine 23 form the signal peptide. Disulfide bonds link cysteine 24–cysteine 122 and cysteine 52–cysteine 162. N-linked (GlcNAc...) asparagine glycosylation occurs at asparagine 101.

It belongs to the alpha/beta interferon family. IFN-alphaII subfamily. In terms of tissue distribution, constitutively and exclusively expressed in the mononuclear cells of the extraembryonic trophectoderm.

Its subcellular location is the secreted. Functionally, paracrine hormone primarily responsible for maternal recognition of pregnancy. Interacts with endometrial receptors, probably type I interferon receptors, and blocks estrogen receptor expression, preventing the estrogen-induced increase in oxytocin receptor expression in the endometrium. This results in the suppression of the pulsatile endometrial release of the luteolytic hormone prostaglandin F2-alpha, hindering the regression of the corpus luteum (luteolysis) and therefore a return to ovarian cyclicity. This, and a possible direct effect of IFN-tau on prostaglandin synthesis, leads in turn to continued ovarian progesterone secretion, which stimulates the secretion by the endometrium of the nutrients required for the growth of the conceptus. In summary, displays particularly high antiviral and antiproliferative potency concurrently with particular weak cytotoxicity, high antiluteolytic activity and immunomodulatory properties. In contrast with other IFNs, IFN-tau is not virally inducible. This Bos taurus (Bovine) protein is Interferon tau-1 (IFNT1).